We begin with the raw amino-acid sequence, 481 residues long: Protein hedgehog (481 aa).

The signal sequence occupies residues 1-19 (MDNQAVSALWSCASATCLS). The propeptide occupies 20 to 90 (LDAKRHSIEP…LALNFRHAHS (71 aa)). Residues 26 to 56 (SIEPNPDGQASPDVNNNNNNHNKSTTTVDAH) form a disordered region. Cysteine 91 carries N-palmitoyl cysteine lipidation. Glutamate 155, glutamate 156, aspartate 161, threonine 191, glutamate 192, aspartate 195, and aspartate 197 together coordinate Ca(2+). Glycine 264 carries Cholesterol glycine ester lipidation.

It belongs to the hedgehog family. As to quaternary structure, interacts with shf. The C-terminal part of the hedgehog protein precursor displays an autoproteolysis activity that results in the cleavage of the full-length protein into two parts (N-product and C-product). In addition, the C-terminal part displays a cholesterol transferase activity that results by the covalent attachment of a cholesterol moiety to the C-terminal of the newly generated N-product. The N-product is the active species in both local and long-range signaling, whereas the C-product has no signaling activity. Post-translationally, cholesterylation is required for N-product targeting to lipid rafts and multimerization. In terms of processing, N-palmitoylation by Rasp of the hedgehog N-product, within the secretory pathway, is required for the embryonic and larval patterning activities of the hedgehog signal.

It is found in the nucleus. It localises to the cytoplasm. The protein localises to the cell membrane. The catalysed reaction is glycyl-L-cysteinyl-[protein] + cholesterol + H(+) = [protein]-C-terminal glycyl cholesterol ester + N-terminal L-cysteinyl-[protein]. In terms of biological role, the C-terminal part of the hedgehog protein precursor displays an autoproteolysis activity that results in the cleavage of the full-length protein into two parts (N-product and C-product). In addition, the C-terminal part displays a cholesterol transferase activity that results by the covalent attachment of a cholesterol moiety to the C-terminal of the newly generated N-product. Once cleaved, the C-product has no signaling activity and diffuses from the cell. Functionally, the dually lipidated hedgehog protein N-product is a morphogen which is essential for a variety of patterning events during development. Establishes the anterior-posterior axis of the embryonic segments and patterns the larval imaginal disks. Binds to the patched (ptc) receptor, which functions in association with smoothened (smo), to activate the transcription of target genes wingless (wg), decapentaplegic (dpp) and ptc. In the absence of hh, ptc represses the constitutive signaling activity of smo through fused (fu). Essential component of a signaling pathway which regulates the Duox-dependent gut immune response to bacterial uracil; required to activate Cad99C-dependent endosome formation, norpA-dependent Ca2+ mobilization and p38 MAPK, which are essential steps in the Duox-dependent production of reactive oxygen species (ROS) in response to intestinal bacterial infection. During photoreceptor differentiation, it up-regulates transcription of Ubr3, which in turn promotes the hh-signaling pathway by mediating the ubiquitination and degradation of cos. The sequence is that of Protein hedgehog from Drosophila hydei (Fruit fly).